The sequence spans 373 residues: DNA replication and repair protein RecF (373 aa).

30-37 (GANGSGKT) is an ATP binding site.

Belongs to the RecF family.

Its subcellular location is the cytoplasm. Its function is as follows. The RecF protein is involved in DNA metabolism; it is required for DNA replication and normal SOS inducibility. RecF binds preferentially to single-stranded, linear DNA. It also seems to bind ATP. This Marinobacter nauticus (strain ATCC 700491 / DSM 11845 / VT8) (Marinobacter aquaeolei) protein is DNA replication and repair protein RecF.